Reading from the N-terminus, the 380-residue chain is Chaperone protein DnaJ (380 aa).

A J domain is found at 5–70; that stretch reads DYYEVLGVER…SKRAAYDQYG (66 aa). The segment at 139 to 217 adopts a CR-type zinc-finger fold; sequence GTNVNIRVPT…CHGEGRVEES (79 aa). Zn(2+)-binding residues include Cys152, Cys155, Cys169, Cys172, Cys191, Cys194, Cys205, and Cys208. CXXCXGXG motif repeat units follow at residues 152–159, 169–176, 191–198, and 205–212; these read CKPCDGSG, CPTCGGIG, CPRCHGHG, and CDSCHGEG. The disordered stretch occupies residues 224–245; it reads VPPGVDTGDRIRLSGEGEAGTQ.

Belongs to the DnaJ family. In terms of assembly, homodimer. Zn(2+) serves as cofactor.

The protein resides in the cytoplasm. Participates actively in the response to hyperosmotic and heat shock by preventing the aggregation of stress-denatured proteins and by disaggregating proteins, also in an autonomous, DnaK-independent fashion. Unfolded proteins bind initially to DnaJ; upon interaction with the DnaJ-bound protein, DnaK hydrolyzes its bound ATP, resulting in the formation of a stable complex. GrpE releases ADP from DnaK; ATP binding to DnaK triggers the release of the substrate protein, thus completing the reaction cycle. Several rounds of ATP-dependent interactions between DnaJ, DnaK and GrpE are required for fully efficient folding. Also involved, together with DnaK and GrpE, in the DNA replication of plasmids through activation of initiation proteins. This is Chaperone protein DnaJ from Pseudomonas syringae pv. syringae (strain B728a).